We begin with the raw amino-acid sequence, 146 residues long: Prefoldin subunit alpha (146 aa).

It belongs to the prefoldin alpha subunit family. Heterohexamer of two alpha and four beta subunits.

It is found in the cytoplasm. In terms of biological role, molecular chaperone capable of stabilizing a range of proteins. Seems to fulfill an ATP-independent, HSP70-like function in archaeal de novo protein folding. The chain is Prefoldin subunit alpha from Methanococcus vannielii (strain ATCC 35089 / DSM 1224 / JCM 13029 / OCM 148 / SB).